A 464-amino-acid polypeptide reads, in one-letter code: Soluble pyridine nucleotide transhydrogenase (464 aa).

35-44 (DDRPQVGGNC) contacts FAD.

It belongs to the class-I pyridine nucleotide-disulfide oxidoreductase family. FAD is required as a cofactor.

It is found in the cytoplasm. The enzyme catalyses NAD(+) + NADPH = NADH + NADP(+). In terms of biological role, conversion of NADPH, generated by peripheral catabolic pathways, to NADH, which can enter the respiratory chain for energy generation. This is Soluble pyridine nucleotide transhydrogenase from Azotobacter vinelandii (strain DJ / ATCC BAA-1303).